The sequence spans 451 residues: Glycine--tRNA ligase (451 aa).

Substrate is bound by residues Arg-99 and Glu-168. Residues 200–202 (RNE), 210–215 (FRTREF), 284–285 (EL), and 328–331 (GLDR) each bind ATP. A substrate-binding site is contributed by 215 to 219 (FEQME). Residue 324–328 (EPSVG) coordinates substrate.

The protein belongs to the class-II aminoacyl-tRNA synthetase family. In terms of assembly, homodimer.

Its subcellular location is the cytoplasm. The enzyme catalyses tRNA(Gly) + glycine + ATP = glycyl-tRNA(Gly) + AMP + diphosphate. Its function is as follows. Catalyzes the attachment of glycine to tRNA(Gly). The chain is Glycine--tRNA ligase from Mycoplasmopsis synoviae (strain 53) (Mycoplasma synoviae).